Reading from the N-terminus, the 304-residue chain is Light-independent protochlorophyllide reductase iron-sulfur ATP-binding protein (304 aa).

Residues Gly-46–Thr-51 and Lys-75 each bind ATP. Ser-50 provides a ligand contact to Mg(2+). [4Fe-4S] cluster contacts are provided by Cys-131 and Cys-165. ATP is bound by residues Asn-216–Arg-217 and Pro-240–Leu-242.

The protein belongs to the NifH/BchL/ChlL family. In terms of assembly, homodimer. Protochlorophyllide reductase is composed of three subunits; BchL, BchN and BchB. It depends on [4Fe-4S] cluster as a cofactor.

It catalyses the reaction chlorophyllide a + oxidized 2[4Fe-4S]-[ferredoxin] + 2 ADP + 2 phosphate = protochlorophyllide a + reduced 2[4Fe-4S]-[ferredoxin] + 2 ATP + 2 H2O. Its pathway is porphyrin-containing compound metabolism; bacteriochlorophyll biosynthesis (light-independent). Its function is as follows. Component of the dark-operative protochlorophyllide reductase (DPOR) that uses Mg-ATP and reduced ferredoxin to reduce ring D of protochlorophyllide (Pchlide) to form chlorophyllide a (Chlide). This reaction is light-independent. The L component serves as a unique electron donor to the NB-component of the complex, and binds Mg-ATP. The polypeptide is Light-independent protochlorophyllide reductase iron-sulfur ATP-binding protein (Rhodobacter capsulatus (strain ATCC BAA-309 / NBRC 16581 / SB1003)).